Consider the following 456-residue polypeptide: Cysteine--tRNA ligase (456 aa).

Zn(2+) is bound at residue C30. Residues 32–42 (MTVYDFCHIGH) carry the 'HIGH' region motif. Residues C211, H236, and E240 each coordinate Zn(2+). The 'KMSKS' region signature appears at 268–272 (KMSKS). Position 271 (K271) interacts with ATP.

The protein belongs to the class-I aminoacyl-tRNA synthetase family. Monomer. The cofactor is Zn(2+).

The protein localises to the cytoplasm. It catalyses the reaction tRNA(Cys) + L-cysteine + ATP = L-cysteinyl-tRNA(Cys) + AMP + diphosphate. In Dichelobacter nodosus (strain VCS1703A), this protein is Cysteine--tRNA ligase.